Reading from the N-terminus, the 863-residue chain is Alanine--tRNA ligase (863 aa).

Residues His552, His556, Cys654, and His658 each contribute to the Zn(2+) site.

The protein belongs to the class-II aminoacyl-tRNA synthetase family. Zn(2+) is required as a cofactor.

Its subcellular location is the cytoplasm. The enzyme catalyses tRNA(Ala) + L-alanine + ATP = L-alanyl-tRNA(Ala) + AMP + diphosphate. Its function is as follows. Catalyzes the attachment of alanine to tRNA(Ala) in a two-step reaction: alanine is first activated by ATP to form Ala-AMP and then transferred to the acceptor end of tRNA(Ala). Also edits incorrectly charged Ser-tRNA(Ala) and Gly-tRNA(Ala) via its editing domain. The sequence is that of Alanine--tRNA ligase from Nitrosomonas eutropha (strain DSM 101675 / C91 / Nm57).